Reading from the N-terminus, the 160-residue chain is Putative flagellin YvzB (160 aa).

It belongs to the bacterial flagellin family. As to quaternary structure, interacts with FliW.

It is found in the bacterial flagellum. This is Putative flagellin YvzB (yvzB) from Bacillus subtilis (strain 168).